Consider the following 223-residue polypeptide: Charged multivesicular body protein 3 (223 aa).

G2 carries N-myristoyl glycine lipidation. The segment at 2–113 (GLFGKTQEKP…LQKSTEVMKA (112 aa)) is intramolecular interaction with C-terminus. A coiled-coil region spans residues 22–54 (KIRKEMRVVDRQIRDIQREEEKVKRSVKDAAKK). Important for autoinhibitory function stretches follow at residues 59 to 64 (VCVVLA) and 168 to 169 (IL). The stretch at 149-223 (ESMDDQEEME…MQSRLATLRS (75 aa)) forms a coiled coil. Residues 151-221 (MDDQEEMEEA…EAMQSRLATL (71 aa)) form an intramolecular interaction with N-terminus region. Positions 151–223 (MDDQEEMEEA…MQSRLATLRS (73 aa)) are interaction with VPS4A. Residue K179 forms a Glycyl lysine isopeptide (Lys-Gly) (interchain with G-Cter in ubiquitin) linkage. Residues 180–223 (APSKVTDALPEPEPAGAMAASEGDEEDDEEDLEAMQSRLATLRS) are disordered. Interaction with STAMBP regions lie at residues 196–223 (AMAASEGDEEDDEEDLEAMQSRLATLRS), 204–208 (EEDDE), and 222–223 (RS). S200 is modified (phosphoserine). The short motif at 201–212 (EGDEEDDEEDLE) is the MIT-interacting motif element. Over residues 201-212 (EGDEEDDEEDLE) the composition is skewed to acidic residues.

This sequence belongs to the SNF7 family. In terms of assembly, probable core component of the endosomal sorting required for transport complex III (ESCRT-III). ESCRT-III components are thought to multimerize to form a flat lattice on the perimeter membrane of the endosome. Several assembly forms of ESCRT-III may exist that interact and act sequentially. Forms a metastable monomer in solution; its core structure (without part of the putative autoinhibitory C-terminal acidic region) oligomerizes into a flat lattice via two different dimerization interfaces. In vitro, heteromerizes with CHMP2A (but not CHMP4) to form helical tubular structures that expose membrane-interacting sites on the outside whereas VPS4B can associate on the inside of the tubule. May interact with IGFBP7; the relevance of such interaction however remains unclear. Interacts with CHMP2A. Interacts with CHMP4A; the interaction requires the release of CHMP4A autoinhibition. Interacts with VPS4A. Interacts with STAMBP; the interaction appears to relieve the autoinhibition of CHMP3. Interacts with VTA1.

The protein resides in the cytoplasm. Its subcellular location is the cytosol. It localises to the membrane. The protein localises to the endosome. It is found in the late endosome membrane. Functionally, probable core component of the endosomal sorting required for transport complex III (ESCRT-III) which is involved in multivesicular bodies (MVBs) formation and sorting of endosomal cargo proteins into MVBs. MVBs contain intraluminal vesicles (ILVs) that are generated by invagination and scission from the limiting membrane of the endosome and mostly are delivered to lysosomes enabling degradation of membrane proteins, such as stimulated growth factor receptors, lysosomal enzymes and lipids. The MVB pathway appears to require the sequential function of ESCRT-O, -I,-II and -III complexes. ESCRT-III proteins mostly dissociate from the invaginating membrane before the ILV is released. The ESCRT machinery also functions in topologically equivalent membrane fission events, such as the terminal stages of cytokinesis. ESCRT-III proteins are believed to mediate the necessary vesicle extrusion and/or membrane fission activities, possibly in conjunction with the AAA ATPase VPS4. Selectively binds to phosphatidylinositol 3,5-bisphosphate PtdIns(3,5)P2 and PtdIns(3,4)P2 in preference to other phosphoinositides tested. Involved in late stages of cytokinesis. Plays a role in endosomal sorting/trafficking of EGF receptor. The protein is Charged multivesicular body protein 3 (Chmp3) of Rattus norvegicus (Rat).